A 786-amino-acid polypeptide reads, in one-letter code: Polyribonucleotide nucleotidyltransferase (786 aa).

Positions 516 and 522 each coordinate Mg(2+). Positions 582–641 (PRVTTVKIPVDKIGMVIGPKGQTINAIQDETGAEISIEDDGTIYVGATNGPSAQAAVERV) constitute a KH domain. An S1 motif domain is found at 653–722 (GDRFLGTVVK…QRGKIYLDKV (70 aa)). Positions 722–786 (VRPEGAEGPA…SRPRRRTRHS (65 aa)) are disordered. A compositionally biased stretch (low complexity) spans 727-738 (AEGPAEAAATDR). The span at 739 to 778 (PAGRDRGDRAPRDRGDRGDRERGSRGPDRGDGGEGGGESR) shows a compositional bias: basic and acidic residues.

This sequence belongs to the polyribonucleotide nucleotidyltransferase family. Mg(2+) serves as cofactor.

It is found in the cytoplasm. The enzyme catalyses RNA(n+1) + phosphate = RNA(n) + a ribonucleoside 5'-diphosphate. Its function is as follows. Involved in mRNA degradation. Catalyzes the phosphorolysis of single-stranded polyribonucleotides processively in the 3'- to 5'-direction. This Salinispora arenicola (strain CNS-205) protein is Polyribonucleotide nucleotidyltransferase.